The following is a 250-amino-acid chain: Triosephosphate isomerase (250 aa).

9–11 is a substrate binding site; the sequence is NWK. Catalysis depends on His94, which acts as the Electrophile. Glu166 acts as the Proton acceptor in catalysis. Residues Gly172, Ser212, and 233–234 contribute to the substrate site; that span reads GG.

The protein belongs to the triosephosphate isomerase family. In terms of assembly, homodimer.

The protein resides in the cytoplasm. It catalyses the reaction D-glyceraldehyde 3-phosphate = dihydroxyacetone phosphate. Its pathway is carbohydrate biosynthesis; gluconeogenesis. The protein operates within carbohydrate degradation; glycolysis; D-glyceraldehyde 3-phosphate from glycerone phosphate: step 1/1. Functionally, involved in the gluconeogenesis. Catalyzes stereospecifically the conversion of dihydroxyacetone phosphate (DHAP) to D-glyceraldehyde-3-phosphate (G3P). The sequence is that of Triosephosphate isomerase from Treponema denticola (strain ATCC 35405 / DSM 14222 / CIP 103919 / JCM 8153 / KCTC 15104).